The chain runs to 124 residues: uncharacterized protein (124 aa).

Its subcellular location is the cytoplasm. The protein resides in the nucleus. This is an uncharacterized protein from Schizosaccharomyces pombe (strain 972 / ATCC 24843) (Fission yeast).